We begin with the raw amino-acid sequence, 262 residues long: Global transcriptional regulator CodY (262 aa).

Residues 1–159 form a GAF domain region; that stretch reads MAHLLEKTRK…ASTVVGIQLL (159 aa). The segment at residues 207 to 226 is a DNA-binding region (H-T-H motif); it reads ASVIADRIGITRSVIVNALR.

The protein belongs to the CodY family.

The protein localises to the cytoplasm. Functionally, DNA-binding global transcriptional regulator which is involved in the adaptive response to starvation and acts by directly or indirectly controlling the expression of numerous genes in response to nutrient availability. During rapid exponential growth, CodY is highly active and represses genes whose products allow adaptation to nutrient depletion. In Streptococcus pneumoniae (strain ATCC BAA-255 / R6), this protein is Global transcriptional regulator CodY.